Here is a 498-residue protein sequence, read N- to C-terminus: Glycerol kinase (498 aa).

Threonine 12 provides a ligand contact to ADP. Positions 12, 13, and 14 each coordinate ATP. Threonine 12 serves as a coordination point for sn-glycerol 3-phosphate. Arginine 16 serves as a coordination point for ADP. Positions 82, 83, and 134 each coordinate sn-glycerol 3-phosphate. Residues arginine 82, glutamate 83, and tyrosine 134 each coordinate glycerol. Phosphohistidine; by HPr is present on histidine 230. Aspartate 244 provides a ligand contact to sn-glycerol 3-phosphate. Glycerol contacts are provided by aspartate 244 and glutamine 245. ADP is bound by residues threonine 266 and glycine 309. Positions 266, 309, 313, and 410 each coordinate ATP. ADP-binding residues include glycine 410 and asparagine 414.

Belongs to the FGGY kinase family. Homotetramer and homodimer (in equilibrium). The phosphoenolpyruvate-dependent sugar phosphotransferase system (PTS), including enzyme I, and histidine-containing protein (HPr) are required for the phosphorylation, which leads to the activation of the enzyme.

It carries out the reaction glycerol + ATP = sn-glycerol 3-phosphate + ADP + H(+). It functions in the pathway polyol metabolism; glycerol degradation via glycerol kinase pathway; sn-glycerol 3-phosphate from glycerol: step 1/1. Activated by phosphorylation and inhibited by fructose 1,6-bisphosphate (FBP). Its function is as follows. Key enzyme in the regulation of glycerol uptake and metabolism. Catalyzes the phosphorylation of glycerol to yield sn-glycerol 3-phosphate. This is Glycerol kinase from Staphylococcus aureus (strain MSSA476).